Consider the following 240-residue polypeptide: ATP-dependent dethiobiotin synthetase BioD (240 aa).

Position 13–18 (13–18) interacts with ATP; that stretch reads EVGKTV. T17 contacts Mg(2+). K38 is an active-site residue. A substrate-binding site is contributed by S42. Residues D55, 116–119, 176–177, and 205–207 each bind ATP; these read EGAG, ND, and PWL. 2 residues coordinate Mg(2+): D55 and E116.

It belongs to the dethiobiotin synthetase family. As to quaternary structure, homodimer. Mg(2+) is required as a cofactor.

It is found in the cytoplasm. The catalysed reaction is (7R,8S)-7,8-diammoniononanoate + CO2 + ATP = (4R,5S)-dethiobiotin + ADP + phosphate + 3 H(+). It participates in cofactor biosynthesis; biotin biosynthesis; biotin from 7,8-diaminononanoate: step 1/2. Catalyzes a mechanistically unusual reaction, the ATP-dependent insertion of CO2 between the N7 and N8 nitrogen atoms of 7,8-diaminopelargonic acid (DAPA, also called 7,8-diammoniononanoate) to form a ureido ring. The protein is ATP-dependent dethiobiotin synthetase BioD of Pseudescherichia vulneris (Escherichia vulneris).